The primary structure comprises 230 residues: Ureidoacrylate amidohydrolase RutB (230 aa).

Aspartate 24 (proton acceptor) is an active-site residue. Lysine 133 is an active-site residue. Cysteine 166 serves as the catalytic Nucleophile.

The protein belongs to the isochorismatase family. RutB subfamily.

It catalyses the reaction (Z)-3-ureidoacrylate + H2O + H(+) = (Z)-3-aminoacrylate + NH4(+) + CO2. The catalysed reaction is (Z)-3-ureidoacrylate + H2O = (Z)-3-aminoacrylate + carbamate + H(+). The enzyme catalyses (Z)-2-methylureidoacrylate + H2O + H(+) = (Z)-2-methylaminoacrylate + NH4(+) + CO2. In terms of biological role, hydrolyzes ureidoacrylate to form aminoacrylate and carbamate. The carbamate hydrolyzes spontaneously, thereby releasing one of the nitrogen atoms of the pyrimidine ring as ammonia and one of its carbon atoms as CO2. This chain is Ureidoacrylate amidohydrolase RutB, found in Escherichia coli O157:H7.